A 92-amino-acid polypeptide reads, in one-letter code: UPF0473 protein BCE33L4129 (92 aa).

It belongs to the UPF0473 family.

The protein is UPF0473 protein BCE33L4129 of Bacillus cereus (strain ZK / E33L).